The following is a 444-amino-acid chain: Transcription activator AKTR-3 (444 aa).

The zn(2)-C6 fungal-type DNA-binding region spans 16 to 43 (CDFCTQSKLRCNKNKPSCRRCTIQQQPC). Residues 49 to 89 (RRTGRPPKHPRTANDCQEANGQHGEQDPVTSTPGGSCQQQS) are disordered. A compositionally biased stretch (basic residues) spans 50-59 (RTGRPPKHPR). Positions 76–89 (PVTSTPGGSCQQQS) are enriched in polar residues.

It is found in the nucleus. Functionally, transcription factor that regulates the expression of the gene clusters that mediate the biosynthesis of the host-selective toxins (HSTs) AK-toxins responsible for Japanese pear black spot disease by the Japanese pear pathotype. AK-toxins are esters of 9,10-epoxy 8-hydroxy 9-methyldecatrienoic acid (EDA). On cellular level, AK-toxins affect plasma membrane of susceptible cells and cause a sudden increase in loss of K(+) after a few minutes of toxin treatment. This Alternaria alternata (Alternaria rot fungus) protein is Transcription activator AKTR-3.